We begin with the raw amino-acid sequence, 511 residues long: Glucose-6-phosphate 1-dehydrogenase (511 aa).

NADP(+) is bound by residues 29-36 (GASGDLAK), Arg-63, and Lys-164. Residues Lys-164, 194-198 (HYLGK), Glu-232, and Asp-251 contribute to the D-glucose 6-phosphate site. His-256 serves as the catalytic Proton acceptor. Lys-347 is an NADP(+) binding site. Residue Lys-350 coordinates D-glucose 6-phosphate. NADP(+) contacts are provided by Lys-356, Arg-360, and Arg-382. Residue Gln-384 coordinates D-glucose 6-phosphate. Residues 390 to 392 (YIK), 410 to 412 (DLT), and Arg-477 each bind NADP(+).

Belongs to the glucose-6-phosphate dehydrogenase family.

The catalysed reaction is D-glucose 6-phosphate + NADP(+) = 6-phospho-D-glucono-1,5-lactone + NADPH + H(+). Its pathway is carbohydrate degradation; pentose phosphate pathway; D-ribulose 5-phosphate from D-glucose 6-phosphate (oxidative stage): step 1/3. In terms of biological role, catalyzes the rate-limiting step of the oxidative pentose-phosphate pathway, which represents a route for the dissimilation of carbohydrates besides glycolysis. The main function of this enzyme is to provide reducing power (NADPH) and pentose phosphates for fatty acid and nucleic acid synthesis. This chain is Glucose-6-phosphate 1-dehydrogenase (gsdA), found in Emericella nidulans (strain FGSC A4 / ATCC 38163 / CBS 112.46 / NRRL 194 / M139) (Aspergillus nidulans).